The primary structure comprises 900 residues: Isoleucine--tRNA ligase (900 aa).

Residues 58-68 (PYANGDLHTGH) carry the 'HIGH' region motif. L-isoleucyl-5'-AMP is bound at residue Glu550. Residues 591–595 (KMSKS) carry the 'KMSKS' region motif. Lys594 contacts ATP. Cys871, Cys874, Cys888, and Cys891 together coordinate Zn(2+).

Belongs to the class-I aminoacyl-tRNA synthetase family. IleS type 1 subfamily. As to quaternary structure, monomer. Requires Zn(2+) as cofactor.

The protein localises to the cytoplasm. It catalyses the reaction tRNA(Ile) + L-isoleucine + ATP = L-isoleucyl-tRNA(Ile) + AMP + diphosphate. Its function is as follows. Catalyzes the attachment of isoleucine to tRNA(Ile). As IleRS can inadvertently accommodate and process structurally similar amino acids such as valine, to avoid such errors it has two additional distinct tRNA(Ile)-dependent editing activities. One activity is designated as 'pretransfer' editing and involves the hydrolysis of activated Val-AMP. The other activity is designated 'posttransfer' editing and involves deacylation of mischarged Val-tRNA(Ile). The polypeptide is Isoleucine--tRNA ligase (Malacoplasma penetrans (strain HF-2) (Mycoplasma penetrans)).